The chain runs to 296 residues: Peroxidase P7 (296 aa).

Residue Gln-1 is modified to Pyrrolidone carboxylic acid. Cystine bridges form between Cys-11–Cys-91, Cys-44–Cys-49, Cys-97–Cys-292, and Cys-176–Cys-201. His-42 functions as the Proton acceptor in the catalytic mechanism. Ca(2+)-binding residues include Asp-43, Val-46, Gly-48, Asp-50, and Ser-52. Pro-139 lines the substrate pocket. Heme b is bound at residue His-169. Thr-170 contributes to the Ca(2+) binding site. A glycan (N-linked (GlcNAc...) asparagine) is linked at Asn-185. The Ca(2+) site is built by Asp-216, Ser-219, and Asp-224.

It belongs to the peroxidase family. Classical plant (class III) peroxidase subfamily. Ca(2+) serves as cofactor. It depends on heme b as a cofactor.

It catalyses the reaction 2 a phenolic donor + H2O2 = 2 a phenolic radical donor + 2 H2O. In terms of biological role, removal of H(2)O(2), oxidation of toxic reductants, biosynthesis and degradation of lignin, suberization, auxin catabolism, response to environmental stresses such as wounding, pathogen attack and oxidative stress. These functions might be dependent on each isozyme/isoform in each plant tissue. This chain is Peroxidase P7, found in Brassica rapa subsp. rapa (Turnip).